The chain runs to 707 residues: Polyribonucleotide nucleotidyltransferase (707 aa).

Asp-488 and Asp-494 together coordinate Mg(2+). One can recognise a KH domain in the interval 555–614 (PRLYVMKINPEKIRDVIGKGGAVIRALTEETGTQINIEEDGTITIASNDSAKADEAKRRI). The 69-residue stretch at 624 to 692 (GKVYEGAITK…EKGRVKLSMK (69 aa)) folds into the S1 motif domain.

Belongs to the polyribonucleotide nucleotidyltransferase family. It depends on Mg(2+) as a cofactor.

It is found in the cytoplasm. It catalyses the reaction RNA(n+1) + phosphate = RNA(n) + a ribonucleoside 5'-diphosphate. Its function is as follows. Involved in mRNA degradation. Catalyzes the phosphorolysis of single-stranded polyribonucleotides processively in the 3'- to 5'-direction. This Polaromonas sp. (strain JS666 / ATCC BAA-500) protein is Polyribonucleotide nucleotidyltransferase.